The primary structure comprises 951 residues: Valine--tRNA ligase (951 aa).

Residues P42–H52 carry the 'HIGH' region motif. Positions K554–S558 match the 'KMSKS' region motif. K557 serves as a coordination point for ATP. The stretch at A880–Q944 forms a coiled coil.

It belongs to the class-I aminoacyl-tRNA synthetase family. ValS type 1 subfamily. As to quaternary structure, monomer.

It is found in the cytoplasm. It carries out the reaction tRNA(Val) + L-valine + ATP = L-valyl-tRNA(Val) + AMP + diphosphate. In terms of biological role, catalyzes the attachment of valine to tRNA(Val). As ValRS can inadvertently accommodate and process structurally similar amino acids such as threonine, to avoid such errors, it has a 'posttransfer' editing activity that hydrolyzes mischarged Thr-tRNA(Val) in a tRNA-dependent manner. The chain is Valine--tRNA ligase (valS) from Escherichia coli (strain K12).